We begin with the raw amino-acid sequence, 446 residues long: tRNA modification GTPase MnmE (446 aa).

(6S)-5-formyl-5,6,7,8-tetrahydrofolate contacts are provided by R22, E80, and K119. Residues 215-370 (GLSLVIAGRP…LKKVIKQVVG (156 aa)) form the TrmE-type G domain. K(+) is bound at residue N225. GTP is bound by residues 225 to 230 (NAGKST), 244 to 250 (TEIAGTT), and 269 to 272 (DTAG). A Mg(2+)-binding site is contributed by S229. Positions 244, 246, and 249 each coordinate K(+). T250 provides a ligand contact to Mg(2+). K446 contributes to the (6S)-5-formyl-5,6,7,8-tetrahydrofolate binding site.

Belongs to the TRAFAC class TrmE-Era-EngA-EngB-Septin-like GTPase superfamily. TrmE GTPase family. In terms of assembly, homodimer. Heterotetramer of two MnmE and two MnmG subunits. The cofactor is K(+).

Its subcellular location is the cytoplasm. In terms of biological role, exhibits a very high intrinsic GTPase hydrolysis rate. Involved in the addition of a carboxymethylaminomethyl (cmnm) group at the wobble position (U34) of certain tRNAs, forming tRNA-cmnm(5)s(2)U34. This Legionella pneumophila (strain Paris) protein is tRNA modification GTPase MnmE.